The sequence spans 458 residues: Sulfite exporter TauE/SafE family protein 2 (458 aa).

The next 12 helical transmembrane spans lie at 5-25 (FVPI…EQEP), 53-73 (IELT…SSIS), 74-94 (SAGG…VAGL), 101-121 (SFSA…NLFV), 128-148 (GKTL…LLGV), 150-170 (IGVI…FAVF), 227-247 (FPWI…AVYL), 267-287 (YWLI…WICF), 324-344 (VMAL…GMLI), 348-368 (LLQV…MVLF), 386-406 (GTAS…LKVV), and 418-438 (IIVF…TSYG).

Belongs to the 4-toluene sulfonate uptake permease (TSUP) (TC 2.A.102) family.

The protein resides in the membrane. In Arabidopsis thaliana (Mouse-ear cress), this protein is Sulfite exporter TauE/SafE family protein 2.